We begin with the raw amino-acid sequence, 251 residues long: Cell division protein ZapD (251 aa).

This sequence belongs to the ZapD family. In terms of assembly, interacts with FtsZ.

Its subcellular location is the cytoplasm. Functionally, cell division factor that enhances FtsZ-ring assembly. Directly interacts with FtsZ and promotes bundling of FtsZ protofilaments, with a reduction in FtsZ GTPase activity. This is Cell division protein ZapD from Burkholderia cenocepacia (strain HI2424).